The following is a 455-amino-acid chain: tRNA modification GTPase MnmE (455 aa).

Arg23, Glu85, and Arg124 together coordinate (6S)-5-formyl-5,6,7,8-tetrahydrofolate. The 156-residue stretch at Gly220–Ile375 folds into the TrmE-type G domain. K(+) is bound at residue Asn230. GTP contacts are provided by residues Asn230–Ser235, Thr249–Thr255, and Asp274–Gly277. Ser234 contacts Mg(2+). Residues Thr249, Val251, and Thr254 each coordinate K(+). Residue Thr255 participates in Mg(2+) binding. Position 455 (Lys455) interacts with (6S)-5-formyl-5,6,7,8-tetrahydrofolate.

It belongs to the TRAFAC class TrmE-Era-EngA-EngB-Septin-like GTPase superfamily. TrmE GTPase family. As to quaternary structure, homodimer. Heterotetramer of two MnmE and two MnmG subunits. K(+) serves as cofactor.

Its subcellular location is the cytoplasm. Functionally, exhibits a very high intrinsic GTPase hydrolysis rate. Involved in the addition of a carboxymethylaminomethyl (cmnm) group at the wobble position (U34) of certain tRNAs, forming tRNA-cmnm(5)s(2)U34. This chain is tRNA modification GTPase MnmE, found in Geotalea uraniireducens (strain Rf4) (Geobacter uraniireducens).